Here is a 160-residue protein sequence, read N- to C-terminus: uncharacterized protein (160 aa).

Residue Tyr-49 is modified to Phosphotyrosine.

Its function is as follows. May be involved in the assembly, structure, or function of the flagellum. May polymerize to form a filamentous structure that is part of the flagellum. This is an uncharacterized protein from Bacillus subtilis (strain 168).